Here is a 526-residue protein sequence, read N- to C-terminus: Alpha-N-acetylgalactosaminide alpha-2,6-sialyltransferase 1 (526 aa).

The Cytoplasmic segment spans residues 1–12 (MTRYCRGLSQRQ). The helical; Signal-anchor for type II membrane protein transmembrane segment at 13 to 33 (AFLLLTVLALLFILLFVVKDP) threads the bilayer. Over 34-526 (RAKDSRCQFI…QRPQSDKAKN (493 aa)) the chain is Lumenal. The interval 49–182 (SAQENQQKAE…TRRRQRLKAS (134 aa)) is disordered. The segment covering 81–106 (KDLKKQEREAVQGEQAEGKEKRKLET) has biased composition (basic and acidic residues). Residues 161-171 (ATKSPASSPHP) show a composition bias toward polar residues. Asn-206, Asn-228, Asn-259, Asn-303, and Asn-388 each carry an N-linked (GlcNAc...) asparagine glycan. Intrachain disulfides connect Cys-207-Cys-290 and Cys-293-Cys-461.

Belongs to the glycosyltransferase 29 family. Glycosylated; autosialylated. In terms of tissue distribution, submaxillary gland, mammary gland, spleen and colon.

Its subcellular location is the golgi apparatus membrane. It catalyses the reaction a beta-D-galactosyl-(1-&gt;3)-N-acetyl-alpha-D-galactosaminyl derivative + CMP-N-acetyl-beta-neuraminate = a beta-D-galactosyl-(1-&gt;3)-[N-acetyl-alpha-neuraminyl-(2-&gt;6)]-N-acetyl-alpha-D-galactosaminyl derivative + CMP + H(+). It carries out the reaction a 3-O-[N-acetyl-alpha-D-galactosaminyl]-L-seryl-[protein] + CMP-N-acetyl-beta-neuraminate = a 3-O-[N-acetyl-alpha-neuraminosyl-(2-&gt;6)-N-acetyl-alpha-D-galactosaminyl]-L-seryl-[protein] + CMP + H(+). The catalysed reaction is a 3-O-[N-acetyl-alpha-D-galactosaminyl]-L-threonyl-[protein] + CMP-N-acetyl-beta-neuraminate = a 3-O-[N-acetyl-alpha-neuraminosyl-(2-&gt;6)-N-acetyl-alpha-D-galactosaminyl]-L-threonyl-[protein] + CMP + H(+). The enzyme catalyses a 3-O-[beta-D-galactosyl-(1-&gt;3)-N-acetyl-alpha-D-galactosaminyl]-L-seryl-[protein] + CMP-N-acetyl-beta-neuraminate = a 3-O-{beta-D-galactosyl-(1-&gt;3)-[N-acetyl-alpha-neuraminosyl-(2-&gt;6)]-N-acetyl-alpha-D-galactosaminyl}-L-seryl-[protein] + CMP + H(+). It catalyses the reaction a 3-O-[beta-D-galactosyl-(1-&gt;3)-N-acetyl-alpha-D-galactosaminyl]-L-threonyl-[protein] + CMP-N-acetyl-beta-neuraminate = a 3-O-{beta-D-galactosyl-(1-&gt;3)-[N-acetyl-alpha-neuraminosyl-(2-&gt;6)]-N-acetyl-alpha-D-galactosaminyl}-L-threonyl-[protein] + CMP + H(+). It carries out the reaction a 3-O-[N-acetyl-alpha-neuraminyl-(2-&gt;3)-beta-D-galactosyl-(1-&gt;3)-N-acetyl-alpha-D-galactosaminyl]-L-threonyl-[protein] + CMP-N-acetyl-beta-neuraminate = a 3-O-{alpha-Neu5Ac-(2-&gt;3)-beta-D-Gal-(1-&gt;3)-[alpha-Neu5Ac-(2-&gt;6)]-alpha-D-GalNAc}-L-threonyl-[protein] + CMP + H(+). It functions in the pathway protein modification; protein glycosylation. Functionally, protein sialyltransferase specifically expressed in goblet cells that plays a key role in intestinal host-commensal homeostasis. Conjugates sialic acid with an alpha-2-6 linkage to N-acetylgalactosamine (GalNAc) glycan chains linked to serine or threonine in glycoproteins. Catalyzes the formation of the sialyl-Tn (S-Tn) antigen, an antigen found in intestinal goblet cells. Protein sialylation in globlet cells is essential for mucus integrity and is required to protect the intestinal mucus against excessive bacterial proteolytic degradation. This chain is Alpha-N-acetylgalactosaminide alpha-2,6-sialyltransferase 1, found in Mus musculus (Mouse).